The chain runs to 549 residues: SH3 domain-containing protein 21 (549 aa).

A disordered region spans residues Met-1–Ser-56. Over residues Pro-41–Tyr-54 the composition is skewed to polar residues. The SH3 domain occupies Ser-65–Pro-126. Disordered regions lie at residues Pro-142–Lys-303 and Phe-332–Asn-479. The span at Gln-211–Ser-220 shows a compositional bias: low complexity. 2 stretches are compositionally biased toward basic and acidic residues: residues Pro-267 to Ala-280 and Phe-332 to Gln-342. Composition is skewed to polar residues over residues Cys-343–Gln-365 and Val-439–Gln-456. Positions Met-482–Met-510 form a coiled coil. The tract at residues Gln-528 to Glu-549 is disordered.

This chain is SH3 domain-containing protein 21 (Sh3d21), found in Mus musculus (Mouse).